Reading from the N-terminus, the 578-residue chain is Polypeptide N-acetylgalactosaminyltransferase 4 (578 aa).

Topologically, residues 1–12 are cytoplasmic; that stretch reads MAVRWTWAGKSC. Residues 13–35 form a helical; Signal-anchor for type II membrane protein membrane-spanning segment; that stretch reads LLLALLTLAYILVEFSVSTLYAS. At 36–578 the chain is on the lumenal side; that stretch reads PGAGGARELG…DKNQLWRFEK (543 aa). Cystine bridges form between Cys124–Cys357, Cys348–Cys421, Cys457–Cys477, Cys503–Cys518, and Cys547–Cys565. A catalytic subdomain A region spans residues 134–243; sequence LPTTSVIIAF…TGWLEPLLER (110 aa). Positions 175 and 204 each coordinate substrate. The Mn(2+) site is built by Asp227 and His229. The interval 303–365 is catalytic subdomain B; it reads PIRSPTMAGG…PCSHVGHVFP (63 aa). Trp334 contributes to the substrate binding site. His362 is a binding site for Mn(2+). Tyr370 is a binding site for substrate. The region spanning 444-577 is the Ricin B-type lectin domain; the sequence is WHGAIRSMGI…LDKNQLWRFE (134 aa). Asn471 carries N-linked (GlcNAc...) asparagine glycosylation.

The protein belongs to the glycosyltransferase 2 family. GalNAc-T subfamily. Mn(2+) is required as a cofactor. In terms of tissue distribution, highly expressed in sublingual gland, stomach, colon, small intestine and cervix. Expressed at intermediate levels in kidney, ovary, lung and uterus. Weakly expressed in spleen, liver, heart and brain. Not expressed in submandibular and parotid glands, skeletal muscle and testis.

Its subcellular location is the golgi apparatus membrane. It catalyses the reaction L-seryl-[protein] + UDP-N-acetyl-alpha-D-galactosamine = a 3-O-[N-acetyl-alpha-D-galactosaminyl]-L-seryl-[protein] + UDP + H(+). The enzyme catalyses L-threonyl-[protein] + UDP-N-acetyl-alpha-D-galactosamine = a 3-O-[N-acetyl-alpha-D-galactosaminyl]-L-threonyl-[protein] + UDP + H(+). Its pathway is protein modification; protein glycosylation. Functionally, catalyzes the initial reaction in O-linked oligosaccharide biosynthesis, the transfer of an N-acetyl-D-galactosamine residue to a serine or threonine residue on the protein receptor. Has a highest activity toward EA2 peptide substrate and a much lower activity with EPO-T, Muc2, Muc1a, Muc1b. This chain is Polypeptide N-acetylgalactosaminyltransferase 4 (Galnt4), found in Mus musculus (Mouse).